The sequence spans 312 residues: Glycerol-3-phosphate dehydrogenase [NAD(P)+] (312 aa).

NADPH contacts are provided by tryptophan 11, arginine 30, arginine 31, and lysine 95. Sn-glycerol 3-phosphate contacts are provided by lysine 95, glycine 123, and serine 125. Position 127 (alanine 127) interacts with NADPH. The sn-glycerol 3-phosphate site is built by lysine 177, aspartate 230, serine 240, arginine 241, and asparagine 242. Lysine 177 acts as the Proton acceptor in catalysis. Position 241 (arginine 241) interacts with NADPH. Valine 265 and glutamate 267 together coordinate NADPH.

It belongs to the NAD-dependent glycerol-3-phosphate dehydrogenase family.

It localises to the cytoplasm. It catalyses the reaction sn-glycerol 3-phosphate + NAD(+) = dihydroxyacetone phosphate + NADH + H(+). It carries out the reaction sn-glycerol 3-phosphate + NADP(+) = dihydroxyacetone phosphate + NADPH + H(+). Its pathway is membrane lipid metabolism; glycerophospholipid metabolism. In terms of biological role, catalyzes the reduction of the glycolytic intermediate dihydroxyacetone phosphate (DHAP) to sn-glycerol 3-phosphate (G3P), the key precursor for phospholipid synthesis. The protein is Glycerol-3-phosphate dehydrogenase [NAD(P)+] of Helicobacter acinonychis (strain Sheeba).